We begin with the raw amino-acid sequence, 353 residues long: UPF0283 membrane protein YcjF (353 aa).

3 helical membrane-spanning segments follow: residues 70-90 (MVMG…VQWT), 100-120 (VALG…GSVV), and 213-233 (ESTL…FIAW).

Belongs to the UPF0283 family.

It localises to the cell inner membrane. The polypeptide is UPF0283 membrane protein YcjF (Escherichia fergusonii (strain ATCC 35469 / DSM 13698 / CCUG 18766 / IAM 14443 / JCM 21226 / LMG 7866 / NBRC 102419 / NCTC 12128 / CDC 0568-73)).